The chain runs to 193 residues: Potassium-transporting ATPase KdpC subunit (193 aa).

A helical transmembrane segment spans residues 14-34 (ITFTFLVLCGLVYPLIVTGIA).

It belongs to the KdpC family. In terms of assembly, the system is composed of three essential subunits: KdpA, KdpB and KdpC.

Its subcellular location is the cell membrane. In terms of biological role, part of the high-affinity ATP-driven potassium transport (or Kdp) system, which catalyzes the hydrolysis of ATP coupled with the electrogenic transport of potassium into the cytoplasm. This subunit acts as a catalytic chaperone that increases the ATP-binding affinity of the ATP-hydrolyzing subunit KdpB by the formation of a transient KdpB/KdpC/ATP ternary complex. The polypeptide is Potassium-transporting ATPase KdpC subunit (Bacillus cereus (strain G9842)).